A 230-amino-acid polypeptide reads, in one-letter code: Cytidylate kinase (230 aa).

12–20 (GPSGTGKST) serves as a coordination point for ATP.

The protein belongs to the cytidylate kinase family. Type 1 subfamily.

It is found in the cytoplasm. It catalyses the reaction CMP + ATP = CDP + ADP. The enzyme catalyses dCMP + ATP = dCDP + ADP. The polypeptide is Cytidylate kinase (Corynebacterium glutamicum (strain ATCC 13032 / DSM 20300 / JCM 1318 / BCRC 11384 / CCUG 27702 / LMG 3730 / NBRC 12168 / NCIMB 10025 / NRRL B-2784 / 534)).